A 117-amino-acid polypeptide reads, in one-letter code: Large ribosomal subunit protein uL24 (117 aa).

This sequence belongs to the universal ribosomal protein uL24 family. Part of the 50S ribosomal subunit.

Functionally, one of two assembly initiator proteins, it binds directly to the 5'-end of the 23S rRNA, where it nucleates assembly of the 50S subunit. One of the proteins that surrounds the polypeptide exit tunnel on the outside of the subunit. This is Large ribosomal subunit protein uL24 from Trichormus variabilis (strain ATCC 29413 / PCC 7937) (Anabaena variabilis).